The primary structure comprises 311 residues: MSQQLPVRIATRKSPLALWQAHFVKDALQAAHPGLEVELVTMVTKGDIILDTPLAKVGGKGLFVKELEVAMLEGRADLAVHSMKDVPVEFPEGLGLVTICEREDPRDAFVSNTYNNIDELPQGAVVGTCSLRRQCQLKEARPDLIIKELRGNVGTRLQKLDDGNYDAIILACAGLIRLGLEDRIKSAIEPEQSLPAVGQGAVGIEARLDDDRLRALLEPLNHPETANRVLCERAMNNRLEGGCQVPIGSYSLIDGDQIWLRALVGEPDGSVMIRGEVSGPVSDAEALGTQLADQLLNDGAKEILERLYAEA.

The residue at position 243 (cysteine 243) is an S-(dipyrrolylmethanemethyl)cysteine.

This sequence belongs to the HMBS family. In terms of assembly, monomer. It depends on dipyrromethane as a cofactor.

It carries out the reaction 4 porphobilinogen + H2O = hydroxymethylbilane + 4 NH4(+). Its pathway is porphyrin-containing compound metabolism; protoporphyrin-IX biosynthesis; coproporphyrinogen-III from 5-aminolevulinate: step 2/4. Functionally, tetrapolymerization of the monopyrrole PBG into the hydroxymethylbilane pre-uroporphyrinogen in several discrete steps. The polypeptide is Porphobilinogen deaminase (Aliivibrio fischeri (strain ATCC 700601 / ES114) (Vibrio fischeri)).